Here is a 308-residue protein sequence, read N- to C-terminus: Uricase-2 isozyme 1 (308 aa).

Active-site charge relay system residues include Lys17 and Thr63. Residues Thr63, Asp64, Phe165, Arg182, Val237, Gln238, and Asn264 each contribute to the urate site. His266 (charge relay system) is an active-site residue. The Microbody targeting signal signature appears at 306 to 308; sequence SKL.

It belongs to the uricase family.

It localises to the peroxisome. It carries out the reaction urate + O2 + H2O = 5-hydroxyisourate + H2O2. It functions in the pathway purine metabolism; urate degradation; (S)-allantoin from urate: step 1/3. In terms of biological role, catalyzes the oxidation of uric acid to 5-hydroxyisourate, which is further processed to form (S)-allantoin. This Canavalia lineata (Beach bean) protein is Uricase-2 isozyme 1.